The chain runs to 396 residues: Tryptophan synthase beta chain (396 aa).

Lys88 is modified (N6-(pyridoxal phosphate)lysine).

It belongs to the TrpB family. In terms of assembly, tetramer of two alpha and two beta chains. Pyridoxal 5'-phosphate serves as cofactor.

It catalyses the reaction (1S,2R)-1-C-(indol-3-yl)glycerol 3-phosphate + L-serine = D-glyceraldehyde 3-phosphate + L-tryptophan + H2O. It functions in the pathway amino-acid biosynthesis; L-tryptophan biosynthesis; L-tryptophan from chorismate: step 5/5. In terms of biological role, the beta subunit is responsible for the synthesis of L-tryptophan from indole and L-serine. In Actinobacillus pleuropneumoniae serotype 7 (strain AP76), this protein is Tryptophan synthase beta chain.